Reading from the N-terminus, the 282-residue chain is Pantothenate synthetase (282 aa).

An ATP-binding site is contributed by Met30–His37. The Proton donor role is filled by His37. Residue Gln60 participates in (R)-pantoate binding. A beta-alanine-binding site is contributed by Gln60. Residue Gly146–Asp149 coordinates ATP. Gln152 contributes to the (R)-pantoate binding site. Residues Ile175 and Lys183–Arg186 contribute to the ATP site.

This sequence belongs to the pantothenate synthetase family. Homodimer.

Its subcellular location is the cytoplasm. It carries out the reaction (R)-pantoate + beta-alanine + ATP = (R)-pantothenate + AMP + diphosphate + H(+). Its pathway is cofactor biosynthesis; (R)-pantothenate biosynthesis; (R)-pantothenate from (R)-pantoate and beta-alanine: step 1/1. Functionally, catalyzes the condensation of pantoate with beta-alanine in an ATP-dependent reaction via a pantoyl-adenylate intermediate. This chain is Pantothenate synthetase, found in Campylobacter jejuni subsp. doylei (strain ATCC BAA-1458 / RM4099 / 269.97).